The primary structure comprises 1167 residues: RNA-directed RNA polymerase (1167 aa).

The RdRp catalytic domain occupies 553–735 (LTYGILAEAT…KALASYTGLE (183 aa)).

This sequence belongs to the reoviridae RNA-directed RNA polymerase family. In terms of assembly, interacts with VP3 (Potential). Interacts with VP2 (Potential). Interacts with NSP5; this interaction is probably necessary for the formation of functional virus factories.

Its subcellular location is the virion. It carries out the reaction RNA(n) + a ribonucleoside 5'-triphosphate = RNA(n+1) + diphosphate. In terms of biological role, RNA-directed RNA polymerase that is involved in both transcription and genome replication. Together with VP3 capping enzyme, forms an enzyme complex positioned near the channels situated at each of the five-fold vertices of the core. Following infection, the outermost layer of the virus is lost, leaving a double-layered particle (DLP) made up of the core and VP6 shell. VP1 then catalyzes the transcription of fully conservative plus-strand genomic RNAs that are extruded through the DLP's channels into the cytoplasm where they function as mRNAs for translation of viral proteins. One copy of each of the viral (+)RNAs is also recruited during core assembly, together with newly synthesized polymerase complexes and VP2. The polymerase of these novo-formed particles catalyzes the synthesis of complementary minus-strands leading to dsDNA formation. To do so, the polymerase specifically recognizes conserved 3' sequence(s) in plus-strand RNA templates. Once dsRNA synthesis is complete, the polymerase switches to the transcriptional mode, thus providing secondary transcription. The protein is RNA-directed RNA polymerase of Rotavirus X (isolate RVX/Human/Bangladesh/NADRV-B219/2002/GXP[X]) (RV ADRV-N).